The sequence spans 351 residues: Methionine import ATP-binding protein MetN (351 aa).

Residues 4–249 enclose the ABC transporter domain; the sequence is VQLDHVSVTF…PKAELTQKFV (246 aa). 41 to 48 is a binding site for ATP; that stretch reads GFSGAGKS.

This sequence belongs to the ABC transporter superfamily. Methionine importer (TC 3.A.1.24) family. The complex is composed of two ATP-binding proteins (MetN), two transmembrane proteins (MetI) and a solute-binding protein (MetQ).

It localises to the cell membrane. The enzyme catalyses L-methionine(out) + ATP + H2O = L-methionine(in) + ADP + phosphate + H(+). It catalyses the reaction D-methionine(out) + ATP + H2O = D-methionine(in) + ADP + phosphate + H(+). Part of the ABC transporter complex MetNIQ involved in methionine import. Responsible for energy coupling to the transport system. The protein is Methionine import ATP-binding protein MetN of Lactobacillus delbrueckii subsp. bulgaricus (strain ATCC BAA-365 / Lb-18).